Reading from the N-terminus, the 845-residue chain is MSNSRPRSRRDAGGGAGAAGRDELVSRSLQSAEHCLGVQDFGTAYAHYLLVLSLAPELKHDVKETFQYTLFRWAEELDALSRIQDLLGCYEQALELFPDDEVICNSMGEHLFRMGFRDEAAGYFHKAVKLNPDFSDAKENFYRVANWLVERWHFIMLNDTKRNTIYNAAIQKAVCLGSKSVLDIGAGTGILSMFAKKAGAHSVYACELSKTMYELACDVVAANKMEAGIKLLHTKSLDIEIPKHIPERVSLVVTETVDAGLFGEGIVESLIHAWEHLLLQPKTKGESANCEKYGKVIPASAVIFGMAVECAEIRRHHRVGIKDIAGIHLPTNVKFQSPAYSSVDTEETIEPYTTEKMSRVPGGYLALTECFEIMTVDFNNLQELKSLATKKPDKIGIPVIKEGILDAIMVWFVLQLDDEHSLSTSPSEETCWEQAVYPVQDLADYWIKPGDHVMMEVSCQDCYLRIQSISVLGLECEMDVAKSFTQNKDLLSLGNEAELCSALANLQTSKPDAVEQTCILESTEIALLNNIPYHEGFKMAMSKVLSSLTPEKLYQTMDTHCQNEMSSGTGQSNTVQNILEPFYVLDVSEGFSVLPVIAGTLGQVKPYSSVEKDQHRIALDLISEANHFPKETLEFWLRHVEDESAMLQRPKSDKLWSIIILDVIEPSGLIQQEIMEKAAISRCLLQSGGKIFPQYVLMFGLLVESQTLLEENAVQGTERTLGLNIAPFINQFQVPIRVFLDLSSLPCIPLSKPVELLRLDLMTPYLNTSNREVKVYVCKSGRLTAIPFWYHMYLDEEIRLDTSSEASHWKQAAVVLDNPIQVEMGEELVLSIQHHKSNVSITVKQ.

TPR repeat units follow at residues 25-58 (VSRS…APEL), 67-100 (QYTL…FPDD), and 101-134 (EVIC…NPDF). 2 consecutive SAM-dependent MTase PRMT-type domains span residues 137–466 (AKEN…YLRI) and 530–845 (NIPY…TVKQ).

It belongs to the class I-like SAM-binding methyltransferase superfamily. Protein arginine N-methyltransferase family. In terms of assembly, found in a complex with PRMT9, SF3B2 and SF3B4. Interacts with SF3B2.

It is found in the cytoplasm. The catalysed reaction is L-arginyl-[protein] + 2 S-adenosyl-L-methionine = N(omega),N(omega)'-dimethyl-L-arginyl-[protein] + 2 S-adenosyl-L-homocysteine + 2 H(+). Functionally, arginine methyltransferase that can both catalyze the formation of omega-N monomethylarginine (MMA) and symmetrical dimethylarginine (sDMA). Specifically mediates the symmetrical dimethylation of SF3B2. Involved in the regulation of alternative splicing of pre-mRNA. The sequence is that of Protein arginine N-methyltransferase 9 from Homo sapiens (Human).